The chain runs to 253 residues: MGQPLPPVALLLLVSASSRAADVPKALVLLDPPWASVLKDDHVTLKCQGLHPAGDNTTQWLHNGSLLSSQAPAYTITAARAEDGGEYRCQTGLSSLSDPVQLRVHLGWLVLQAPRWVFQEGEPIQLRCHSWKNNKLHKVTYLQNGRGLRYFHQNSDLHIPEATRNHSGSYFCRGLIRHHNVSSETVTITVQGPANPVVSSSVLPWHQIAFCLVMGLLLAADTGLYFSVQRDLRSSQRARKEHTLGWSLGSQDK.

The first 20 residues, 1 to 20 (MGQPLPPVALLLLVSASSRA), serve as a signal peptide directing secretion. At 21–207 (ADVPKALVLL…VSSSVLPWHQ (187 aa)) the chain is on the extracellular side. Ig-like C2-type domains lie at 24–105 (PKAL…LRVH) and 120–189 (EGEP…VTIT). Cystine bridges form between Cys47-Cys89 and Cys128-Cys172. 4 N-linked (GlcNAc...) asparagine glycosylation sites follow: Asn56, Asn63, Asn165, and Asn180. Residues 208-226 (IAFCLVMGLLLAADTGLYF) traverse the membrane as a helical segment. Over 227 to 253 (SVQRDLRSSQRARKEHTLGWSLGSQDK) the chain is Cytoplasmic.

As to quaternary structure, forms a heterooligomeric complex with ITAM-containing signaling subunits FCER1G. Interacts (via transmembrane domain) with signaling subunits; this interaction is a prerequisite for receptor complex expression on the cell surface and intracellular signal transduction. Binds the Fc region of antigen-complexed IgG.

Its subcellular location is the cell membrane. Receptor for the invariable Fc fragment of immunoglobulin gamma (IgG). Optimally activated upon binding of clustered antigen-IgG complexes displayed on cell surfaces, triggers lysis of antibody-coated cells, a process known as antibody-dependent cellular cytotoxicity (ADCC). Does not bind free monomeric IgG, thus avoiding inappropriate effector cell activation in the absence of antigenic trigger. Mediates IgG effector functions on natural killer (NK) cells. Binds antigen-IgG complexes generated upon infection and triggers NK cell-dependent cytokine production and degranulation to limit viral load and propagation. Fc-binding subunit that associates with FCER1G adapters to form functional signaling complexes. Following the engagement of antigen-IgG complexes, triggers phosphorylation of immunoreceptor tyrosine-based activation motif (ITAM)-containing adapters with subsequent activation of phosphatidylinositol 3-kinase signaling and sustained elevation of intracellular calcium that ultimately drive NK cell activation. Mediates enhanced ADCC in response to afucosylated IgGs. In Oryctolagus cuniculus (Rabbit), this protein is Low affinity immunoglobulin gamma Fc region receptor III-B (FCGR3B).